The chain runs to 202 residues: MSRYRGPRLRITRRLGDLPGLTRKAAKRSNPPGQHGNARRKRSEYAIRLEEKQKLRFNYGISERQLVRYVKKARAMEGSTGTNLLKLLEGRLDNVCFRLGFGPTIPGSRQLVNHGHVTVNGKTLDIASYQCKSGDTIAIRERKGSKKLAEGNLEFPGLANVPPHLELEKSKMTAKVTGKCDREWVAIEINELLVVEYYSRKV.

The disordered stretch occupies residues 15–43 (LGDLPGLTRKAAKRSNPPGQHGNARRKRS). Positions 90–152 (GRLDNVCFRL…KGSKKLAEGN (63 aa)) constitute an S4 RNA-binding domain.

This sequence belongs to the universal ribosomal protein uS4 family. As to quaternary structure, part of the 30S ribosomal subunit. Contacts protein S5. The interaction surface between S4 and S5 is involved in control of translational fidelity.

In terms of biological role, one of the primary rRNA binding proteins, it binds directly to 16S rRNA where it nucleates assembly of the body of the 30S subunit. Its function is as follows. With S5 and S12 plays an important role in translational accuracy. The polypeptide is Small ribosomal subunit protein uS4 (Prochlorococcus marinus (strain SARG / CCMP1375 / SS120)).